Here is a 124-residue protein sequence, read N- to C-terminus: Small ribosomal subunit protein uS12 (124 aa).

Asp89 bears the 3-methylthioaspartic acid mark.

This sequence belongs to the universal ribosomal protein uS12 family. Part of the 30S ribosomal subunit. Contacts proteins S8 and S17. May interact with IF1 in the 30S initiation complex.

With S4 and S5 plays an important role in translational accuracy. Its function is as follows. Interacts with and stabilizes bases of the 16S rRNA that are involved in tRNA selection in the A site and with the mRNA backbone. Located at the interface of the 30S and 50S subunits, it traverses the body of the 30S subunit contacting proteins on the other side and probably holding the rRNA structure together. The combined cluster of proteins S8, S12 and S17 appears to hold together the shoulder and platform of the 30S subunit. This Vibrio campbellii (strain ATCC BAA-1116) protein is Small ribosomal subunit protein uS12.